A 146-amino-acid chain; its full sequence is UPF0260 protein Swit_2819 (146 aa).

It belongs to the UPF0260 family.

This is UPF0260 protein Swit_2819 from Rhizorhabdus wittichii (strain DSM 6014 / CCUG 31198 / JCM 15750 / NBRC 105917 / EY 4224 / RW1) (Sphingomonas wittichii).